Reading from the N-terminus, the 483-residue chain is Pre-glycoprotein polyprotein GP complex (483 aa).

Residue G2 is the site of N-myristoyl glycine; by host attachment. Residues 2 to 17 (GQLVSFIGEIPAIVHE) lie on the Extracellular side of the membrane. A helical transmembrane segment spans residues 18–32 (ALNVALIAVSIIAIM). Residue K33 is a topological domain, cytoplasmic. The chain crosses the membrane as a helical span at residues 34-53 (GLINIWKSGLFQLIMFLILA). Extracellular-side segments run 54 to 58 (GRSCS) and 59 to 422 (ISIG…SLVD). C57 serves as a coordination point for Zn(2+). Residues N73, N88, N130, and N179 are each glycosylated (N-linked (GlcNAc...) asparagine; by host). Intrachain disulfides connect C85–C223, C186–C204, C269–C282, C291–C300, and C354–C375. N216 carries an N-linked (GlcNAc...) asparagine; by host glycan. N-linked (GlcNAc...) asparagine; by host glycans are attached at residues N355, N363, N380, and N385. The chain crosses the membrane as a helical span at residues 423-443 (LCFWSTLFYTASIFLHLLHIP). Topologically, residues 444-483 (THRHIIGEGCPKPHRLTSDSLCACGFFQLKGRPTRWARIP) are cytoplasmic. H445, H447, C453, H457, C465, and C467 together coordinate Zn(2+).

This sequence belongs to the arenaviridae GPC protein family. As to quaternary structure, homotetramer; disulfide-linked. In terms of assembly, homotetramer. GP2 homotetramers bind through ionic interactions with GP1 homotetramers to form the GP complex together with the stable signal peptide. The GP-C polyprotein interacts with the host protease MBTPS1/SKI-1 resulting in the polyprotein processing. Specific enzymatic cleavages in vivo yield mature proteins. GP-C polyprotein is cleaved in the endoplasmic reticulum by the host protease MBTPS1. Only cleaved glycoprotein is incorporated into virions. In terms of processing, the SSP remains stably associated with the GP complex following cleavage by signal peptidase and plays crucial roles in the trafficking of GP through the secretory pathway. Post-translationally, myristoylation is necessary for GP2-mediated fusion activity.

The protein localises to the virion membrane. It localises to the host endoplasmic reticulum membrane. It is found in the host Golgi apparatus membrane. Its subcellular location is the host cell membrane. Class I viral fusion protein that directs fusion of viral and host endosomal membranes, leading to delivery of the nucleocapsid into the cytoplasm. Membrane fusion is mediated by irreversible conformational changes induced upon acidification in the endosome. Functionally, stable signal peptide (SSP): cleaved and functions as a signal peptide. In addition, it is also retained as the third component of the GP complex. The SSP is required for efficient glycoprotein expression, post-translational maturation cleavage of GP1 and GP2, glycoprotein transport to the cell surface plasma membrane, formation of infectious virus particles, and acid pH-dependent glycoprotein-mediated cell fusion. Its function is as follows. Interacts with the host receptor. This chain is Pre-glycoprotein polyprotein GP complex, found in Peromyscus californicus (California mouse).